The sequence spans 198 residues: Dual specificity protein phosphatase 14 (198 aa).

Residues 26-167 (GIAQITSSLF…LIDYERQLFG (142 aa)) enclose the Tyrosine-protein phosphatase domain. The active-site Phosphocysteine intermediate is the Cys-111.

This sequence belongs to the protein-tyrosine phosphatase family. Non-receptor class dual specificity subfamily. In terms of assembly, interacts with CD28.

The catalysed reaction is O-phospho-L-tyrosyl-[protein] + H2O = L-tyrosyl-[protein] + phosphate. The enzyme catalyses O-phospho-L-seryl-[protein] + H2O = L-seryl-[protein] + phosphate. It carries out the reaction O-phospho-L-threonyl-[protein] + H2O = L-threonyl-[protein] + phosphate. Its function is as follows. Involved in the inactivation of MAP kinases. Dephosphorylates ERK, JNK and p38 MAP-kinases. Plays a negative role in TCR signaling by dephosphorylating MAP3K7 adapter TAB1 leading to its inactivation. In Homo sapiens (Human), this protein is Dual specificity protein phosphatase 14 (DUSP14).